The sequence spans 227 residues: Isopentenyl-diphosphate Delta-isomerase 1 (227 aa).

Lys36 is a substrate binding site. His40 and His51 together coordinate Mg(2+). Positions 49 to 199 constitute a Nudix hydrolase domain; the sequence is LLHRAFSVFL…EIKITPWFQI (151 aa). Substrate contacts are provided by Arg70 and Lys74. Cys86 is a catalytic residue. Residue Ser87 participates in substrate binding. Residues Glu146 and Glu148 each coordinate Mg(2+). Glu148 is an active-site residue. Lys176 is subject to N6-acetyllysine. A Microbody targeting signal motif is present at residues 225–227; sequence HRM.

It belongs to the IPP isomerase type 1 family. As to quaternary structure, monomer. Mg(2+) serves as cofactor.

The protein localises to the peroxisome. It catalyses the reaction isopentenyl diphosphate = dimethylallyl diphosphate. It functions in the pathway isoprenoid biosynthesis; dimethylallyl diphosphate biosynthesis; dimethylallyl diphosphate from isopentenyl diphosphate: step 1/1. Catalyzes the 1,3-allylic rearrangement of the homoallylic substrate isopentenyl (IPP) to its highly electrophilic allylic isomer, dimethylallyl diphosphate (DMAPP). The protein is Isopentenyl-diphosphate Delta-isomerase 1 (IDI1) of Macaca fascicularis (Crab-eating macaque).